A 253-amino-acid polypeptide reads, in one-letter code: uncharacterized protein (253 aa).

Residues I17, S36, D62, N89, Y158, K162, V191, and T193 each coordinate NADP(+). Y158 functions as the Proton donor in the catalytic mechanism. K162 (lowers pKa of active site Tyr) is an active-site residue.

It belongs to the short-chain dehydrogenases/reductases (SDR) family.

It is found in the cytoplasm. It localises to the nucleus. This is an uncharacterized protein from Schizosaccharomyces pombe (strain 972 / ATCC 24843) (Fission yeast).